Reading from the N-terminus, the 483-residue chain is Glutamate--tRNA ligase (483 aa).

Positions 11 to 21 (PSPTGLLHIGN) match the 'HIGH' region motif. The short motif at 255–259 (KLSKR) is the 'KMSKS' region element. Position 258 (lysine 258) interacts with ATP.

This sequence belongs to the class-I aminoacyl-tRNA synthetase family. Glutamate--tRNA ligase type 1 subfamily. As to quaternary structure, monomer.

It localises to the cytoplasm. It catalyses the reaction tRNA(Glu) + L-glutamate + ATP = L-glutamyl-tRNA(Glu) + AMP + diphosphate. Catalyzes the attachment of glutamate to tRNA(Glu) in a two-step reaction: glutamate is first activated by ATP to form Glu-AMP and then transferred to the acceptor end of tRNA(Glu). This Lactococcus lactis subsp. cremoris (strain SK11) protein is Glutamate--tRNA ligase.